Reading from the N-terminus, the 146-residue chain is Large ribosomal subunit protein bL9 (146 aa).

It belongs to the bacterial ribosomal protein bL9 family. In terms of assembly, part of the 50S ribosomal subunit. Contacts protein L31.

In terms of biological role, binds to the 23S rRNA and protein L31. The polypeptide is Large ribosomal subunit protein bL9 (rplI) (Deinococcus radiodurans (strain ATCC 13939 / DSM 20539 / JCM 16871 / CCUG 27074 / LMG 4051 / NBRC 15346 / NCIMB 9279 / VKM B-1422 / R1)).